We begin with the raw amino-acid sequence, 389 residues long: Arrestin-C (389 aa).

The protein belongs to the arrestin family. Retina and pineal gland.

In terms of biological role, may play a role in an as yet undefined retina-specific signal transduction. Could bind to photoactivated-phosphorylated red/green opsins. The sequence is that of Arrestin-C (arr3) from Aquarana catesbeiana (American bullfrog).